The chain runs to 336 residues: Glyceraldehyde-3-phosphate dehydrogenase (336 aa).

Residues 12-13, aspartate 34, and serine 120 contribute to the NAD(+) site; that span reads RI. Residues 150–152, threonine 181, arginine 198, 211–212, and arginine 234 contribute to the D-glyceraldehyde 3-phosphate site; these read SCT and TG. The active-site Nucleophile is the cysteine 151. Asparagine 316 provides a ligand contact to NAD(+).

This sequence belongs to the glyceraldehyde-3-phosphate dehydrogenase family. In terms of assembly, homotetramer.

The protein resides in the cytoplasm. It catalyses the reaction D-glyceraldehyde 3-phosphate + phosphate + NAD(+) = (2R)-3-phospho-glyceroyl phosphate + NADH + H(+). It functions in the pathway carbohydrate degradation; glycolysis; pyruvate from D-glyceraldehyde 3-phosphate: step 1/5. Catalyzes the oxidative phosphorylation of glyceraldehyde 3-phosphate (G3P) to 1,3-bisphosphoglycerate (BPG) using the cofactor NAD. The first reaction step involves the formation of a hemiacetal intermediate between G3P and a cysteine residue, and this hemiacetal intermediate is then oxidized to a thioester, with concomitant reduction of NAD to NADH. The reduced NADH is then exchanged with the second NAD, and the thioester is attacked by a nucleophilic inorganic phosphate to produce BPG. This is Glyceraldehyde-3-phosphate dehydrogenase (gapA) from Staphylococcus aureus.